The sequence spans 578 residues: Serine/threonine-protein kinase D6PKL3 (578 aa).

The segment covering 1–24 (MDSSSSVVYVGSSSKSRNFQSKSK) has biased composition (low complexity). The interval 1–64 (MDSSSSVVYV…EVIESSVSSV (64 aa)) is disordered. Polar residues predominate over residues 25–34 (GSITSFSIDS). Over residues 53-64 (SPEVIESSVSSV) the composition is skewed to low complexity. One can recognise a Protein kinase domain in the interval 182–516 (FKLIKKLGGG…ATEIKQHPFF (335 aa)). Residues 188–196 (LGGGDIGNV) and Lys211 contribute to the ATP site. Residue Asp307 is the Proton acceptor of the active site. An activation loop region spans residues 325–426 (DFDLSLRCAV…VGTHEYLAPE (102 aa)). Residues 575–578 (IDFF) carry the PIF motif.

Belongs to the protein kinase superfamily. AGC Ser/Thr protein kinase family. As to expression, expressed predominantly in root tissue with lower levels found in leaf, stem, seed and flower.

It is found in the cell membrane. It catalyses the reaction L-seryl-[protein] + ATP = O-phospho-L-seryl-[protein] + ADP + H(+). The enzyme catalyses L-threonyl-[protein] + ATP = O-phospho-L-threonyl-[protein] + ADP + H(+). Protein kinase that regulates the auxin transport activity of PIN auxin efflux facilitators by direct phosphorylation. D6PK-mediated PIN phosphorylation promotes auxin transport in the hypocotyl and this is a prerequisite for PHOT1-dependent hypocotyl bending. The protein is Serine/threonine-protein kinase D6PKL3 (D6PKL3) of Arabidopsis thaliana (Mouse-ear cress).